A 122-amino-acid chain; its full sequence is LOB domain-containing protein 5 (122 aa).

An LOB domain is found at 8 to 109 (RPCSVCITKN…AYLRELQEKI (102 aa)).

The protein belongs to the LOB domain-containing protein family.

This is LOB domain-containing protein 5 (LBD5) from Arabidopsis thaliana (Mouse-ear cress).